Reading from the N-terminus, the 122-residue chain is Small ribosomal subunit protein uS13 (122 aa).

The disordered stretch occupies residues 94-122 (RGLPVRGQRTKTNARQRKGPRPAIGGRKK).

Belongs to the universal ribosomal protein uS13 family. As to quaternary structure, part of the 30S ribosomal subunit. Forms a loose heterodimer with protein S19. Forms two bridges to the 50S subunit in the 70S ribosome.

Located at the top of the head of the 30S subunit, it contacts several helices of the 16S rRNA. In the 70S ribosome it contacts the 23S rRNA (bridge B1a) and protein L5 of the 50S subunit (bridge B1b), connecting the 2 subunits; these bridges are implicated in subunit movement. Contacts the tRNAs in the A and P-sites. The sequence is that of Small ribosomal subunit protein uS13 from Rubrobacter xylanophilus (strain DSM 9941 / JCM 11954 / NBRC 16129 / PRD-1).